A 1231-amino-acid chain; its full sequence is MTSNRKNENEIINALSIPAVSNHSAQMDLSLDARIEDSLCIAEGNNINPLVSASTVQTGINIAGRILGVLGVPFAGQLASFYSFLVGELWPSGRDPWEIFLEHVEQLIRQQVTENTRNTAIARLEGLGRGYRSYQQALETWLDNRNDARSRSIILERYVALELDITTAIPLFRIRNEEVPLLMVYAQAANLHLLLLRDASLFGSEWGMASSDVNQYYQEQIRYTEEYSNHCVQWYNTGLNNLRGTNAESWLRYNQFRRDLTLGVLDLVALFPSYDTRTYPINTSAQLTREIYTDPIGRTNAPSGFASTNWFNNNAPSFSAIEAAIFRPPHLLDFPEQLTIYSASSRWSSTQHMNYWVGHRLNFRPIGGTLNTSTQGLTNNTSINPVTLQFTSRDVYRTESNAGTNILFTTPVNGVPWARFNFINPQNIYERGATTYSQPYQGVGIQLFDSETELPPETTERPNYESYSHRLSHIGLIIGNTLRAPVYSWTHRSADRTNTIGPNRITQIPAVKGRFLFNGSVISGPGFTGGDVVRLNRNNGNIQNRGYIEVPIQFTSTSTRYRVRVRYASVTSIELNVNLGNSSIFTNTLPATAASLDNLQSGDFGYVEINNAFTSATGNIVGARNFSANAEVIIDRFEFIPVTATFEAEYDLERAQKAVNALFTSTNPRRLKTDVTDYHIDQVSNMVACLSDEFCLDEKRELFEKVKYAKRLSDERNLLQDPNFTFISGQLSFASIDGQSNFTSINELSEHGWWGSENVTIQEGNDVFKENYVTLPGTFNECYPNYLYQKIGESELKAYTRYQLRGYIEDSQDLEIYLIRYNAKHETLDVPGTDSLWPLSVKSPIGRCGEPNRCAPHFEWNPDLDCSCRDGERCAHHSHHFTLDIDVGCTDLHENLGVWVVFKIKTQEGYARLGNLEFIEEKPLIGEALSRVKRAEKKWRDKREKLQLETKRVYTEAKETVDALFVDSHYNRLQADTNIGMIHAADRLVHRIHEAYLPELPFIPGINAVIFEELENRISTAFSLYDARNVIKNGDFNNGLSCWNVKGHVDVQQSHHRSDLVIPEWEAEVSQAVRVCPGRGYILRVTAYKEGYGEGCVTIHEIENNTDELKFKNCEEEEVYPTDTGTCNDYTAHQGTAACNSRNAGYEDAYEVDTTASVNYKPTYEEETYTDVRRDNHCEYDRGYVNYPPVPAGYVTKELEYFPETDTVWIEIGETEGKFIVDSVELLLMEE.

It belongs to the delta endotoxin family.

Its function is as follows. Promotes colloidosmotic lysis by binding to the midgut epithelial cells of lepidopteran larvae. Toxic to Plutella xylostella. This Bacillus thuringiensis subsp. wuhanensis protein is Pesticidal crystal protein Cry1Bd (cry1Bd).